Consider the following 227-residue polypeptide: NADH-quinone oxidoreductase subunit C (227 aa).

The protein belongs to the complex I 30 kDa subunit family. As to quaternary structure, NDH-1 is composed of 14 different subunits. Subunits NuoB, C, D, E, F, and G constitute the peripheral sector of the complex.

It localises to the cell inner membrane. It carries out the reaction a quinone + NADH + 5 H(+)(in) = a quinol + NAD(+) + 4 H(+)(out). NDH-1 shuttles electrons from NADH, via FMN and iron-sulfur (Fe-S) centers, to quinones in the respiratory chain. The immediate electron acceptor for the enzyme in this species is believed to be ubiquinone. Couples the redox reaction to proton translocation (for every two electrons transferred, four hydrogen ions are translocated across the cytoplasmic membrane), and thus conserves the redox energy in a proton gradient. In Legionella pneumophila (strain Corby), this protein is NADH-quinone oxidoreductase subunit C.